The primary structure comprises 585 residues: Beta-(1--&gt;2)glucan export ATP-binding/permease protein NdvA (585 aa).

The region spanning 21-301 is the ABC transmembrane type-1 domain; it reads VGAIVIANIV…MKAFATQIFE (281 aa). The next 6 helical transmembrane spans lie at 22–42, 55–75, 136–156, 158–178, 245–265, and 269–289; these read GAIV…PILF, VAPM…AFVL, QHLA…AMDV, LSLI…VVMS, LNRI…TVLV, and ELGV…IGRL. The ABC transporter domain occupies 335–569; the sequence is VEFRDISFDF…NGRFAALLRA (235 aa). Position 368-375 (368-375) interacts with ATP; that stretch reads GPTGAGKT.

The protein belongs to the ABC transporter superfamily. Beta-(1--&gt;2)glucan exporter (TC 3.A.1.108.1) family. Homodimer.

It is found in the cell inner membrane. The enzyme catalyses [(1-&gt;2)-beta-D-glucosyl](n)(in) + ATP + H2O = [(1-&gt;2)-beta-D-glucosyl](n)(out) + ADP + phosphate + H(+). Functionally, involved in beta-(1--&gt;2)glucan export which is required for nodulation of legume roots. May be involved in other classes of oligosaccharides export. Transmembrane domains (TMD) form a pore in the inner membrane and the ATP-binding domain (NBD) is responsible for energy generation. The polypeptide is Beta-(1--&gt;2)glucan export ATP-binding/permease protein NdvA (Rhizobium meliloti (strain 1021) (Ensifer meliloti)).